The following is a 131-amino-acid chain: Protein FAM107B (131 aa).

Ala-2 bears the N-acetylalanine mark. Disordered stretches follow at residues 39–78 (MNQKRGLAPQNKPELQKVMEKRRRDQVIKQKEEEAQKKKS) and 100–131 (KLQEEQENAPEFVKVKGNLRRTGQEVAQAQES). The residue at position 50 (Lys-50) is an N6-acetyllysine. The segment covering 52 to 78 (ELQKVMEKRRRDQVIKQKEEEAQKKKS) has biased composition (basic and acidic residues). Residues 61 to 112 (RRDQVIKQKEEEAQKKKSDLEIELLKRQQKLEQLELEKQKLQEEQENAPEFV) are a coiled coil.

It belongs to the FAM107 family.

This Rattus norvegicus (Rat) protein is Protein FAM107B.